Here is a 20-residue protein sequence, read N- to C-terminus: Mite allergen Der p 6 (20 aa).

The 20-residue stretch at 1 to 20 (AIGXQPAAEAEAPFQISLMK) folds into the Peptidase S1 domain.

The protein belongs to the peptidase S1 family.

The protein localises to the secreted. In terms of biological role, protease that shows specificity similar to chymotrypsin. The chain is Mite allergen Der p 6 (DERP6) from Dermatophagoides pteronyssinus (European house dust mite).